A 94-amino-acid chain; its full sequence is Acylphosphatase (94 aa).

In terms of domain architecture, Acylphosphatase-like spans 8-94 (RLTAWVHGRV…REQITGFHER (87 aa)). Active-site residues include R23 and N41.

This sequence belongs to the acylphosphatase family.

It carries out the reaction an acyl phosphate + H2O = a carboxylate + phosphate + H(+). In Mycobacterium sp. (strain KMS), this protein is Acylphosphatase (acyP).